The following is a 257-amino-acid chain: Imidazole glycerol phosphate synthase subunit HisF (257 aa).

Residues D12 and D131 contribute to the active site.

This sequence belongs to the HisA/HisF family. In terms of assembly, heterodimer of HisH and HisF.

The protein localises to the cytoplasm. It carries out the reaction 5-[(5-phospho-1-deoxy-D-ribulos-1-ylimino)methylamino]-1-(5-phospho-beta-D-ribosyl)imidazole-4-carboxamide + L-glutamine = D-erythro-1-(imidazol-4-yl)glycerol 3-phosphate + 5-amino-1-(5-phospho-beta-D-ribosyl)imidazole-4-carboxamide + L-glutamate + H(+). It functions in the pathway amino-acid biosynthesis; L-histidine biosynthesis; L-histidine from 5-phospho-alpha-D-ribose 1-diphosphate: step 5/9. Functionally, IGPS catalyzes the conversion of PRFAR and glutamine to IGP, AICAR and glutamate. The HisF subunit catalyzes the cyclization activity that produces IGP and AICAR from PRFAR using the ammonia provided by the HisH subunit. The polypeptide is Imidazole glycerol phosphate synthase subunit HisF (Burkholderia mallei (strain NCTC 10247)).